Reading from the N-terminus, the 190-residue chain is uncharacterized protein (190 aa).

The N-terminal stretch at 1–15 (MKVFAYIALATVVAG) is a signal peptide.

It localises to the secreted. This is an uncharacterized protein from Arthroderma benhamiae (strain ATCC MYA-4681 / CBS 112371) (Trichophyton mentagrophytes).